We begin with the raw amino-acid sequence, 144 residues long: MKTFSPTPENINREWFVVDASDLVLGRLATQITHRLRGKHKPEFAPHMDNGDFIVVVNCEKIKVTGNKLADKKYYRHSGYVGGLHEITLEKLLASHPERVLMNAVRGMLPKNRLGRAMLKKLKVYAGPEHPHAAQNPQPLAIKY.

The protein belongs to the universal ribosomal protein uL13 family. In terms of assembly, part of the 50S ribosomal subunit.

In terms of biological role, this protein is one of the early assembly proteins of the 50S ribosomal subunit, although it is not seen to bind rRNA by itself. It is important during the early stages of 50S assembly. The sequence is that of Large ribosomal subunit protein uL13 from Nitratidesulfovibrio vulgaris (strain DSM 19637 / Miyazaki F) (Desulfovibrio vulgaris).